We begin with the raw amino-acid sequence, 253 residues long: MFFMALRFLIGGIILLPFAKQLTLNRDIFLLSIFTTLSTSFWAYGLLYVEPSESAVLSYTMPLIAIPLSTLILREKTTKTEVIGILIGFSGVVIYSLNLGIYFSLIGIVLTLINAFFWALFTVYFRKLRGFDATSVNAVQLLLGSLIFFTLSPIQFYFKYSINFLVDLLYVSVLGGGISFYLWNSMLKTERVSKVTVLSFSVPAVSTAVDELRGVNVNIGMIEGIGVMFLGILISRLEKKINKSNIINGRFHV.

2 EamA domains span residues 1 to 97 and 116 to 237; these read MFFM…IYSL and FFWA…ISRL. 8 helical membrane passes run 2 to 22, 28 to 48, 53 to 73, 80 to 100, 101 to 121, 138 to 158, 162 to 182, and 214 to 234; these read FFMA…AKQL, IFLL…GLLY, ESAV…TLIL, TEVI…LNLG, IYFS…WALF, AVQL…QFYF, INFL…SFYL, and GVNV…GILI.

It belongs to the EamA transporter family.

The protein localises to the cell membrane. This is an uncharacterized protein from Acidianus ambivalens (Desulfurolobus ambivalens).